Consider the following 761-residue polypeptide: Elongation factor G, mitochondrial (761 aa).

The transit peptide at 1–42 (MSVQKMMWVPRKMVGGRIPFFTCSKVFSGFSRRSFHESPLAR) directs the protein to the mitochondrion. In terms of domain architecture, tr-type G spans 68 to 349 (NKLRNIGISA…AIVDYLPNPS (282 aa)). GTP is bound by residues 77-84 (AHIDSGKT), 148-152 (DTPGH), and 202-205 (NKMD).

The protein belongs to the TRAFAC class translation factor GTPase superfamily. Classic translation factor GTPase family. EF-G/EF-2 subfamily. In terms of processing, the precursor is processed in two steps involving mitochondrial intermediate peptidase (MIP) and mitochondrial processing peptidase (MPP).

Its subcellular location is the mitochondrion. It participates in protein biosynthesis; polypeptide chain elongation. Its function is as follows. Mitochondrial GTPase that catalyzes the GTP-dependent ribosomal translocation step during translation elongation. During this step, the ribosome changes from the pre-translocational (PRE) to the post-translocational (POST) state as the newly formed A-site-bound peptidyl-tRNA and P-site-bound deacylated tRNA move to the P and E sites, respectively. Catalyzes the coordinated movement of the two tRNA molecules, the mRNA and conformational changes in the ribosome. The sequence is that of Elongation factor G, mitochondrial from Saccharomyces cerevisiae (strain ATCC 204508 / S288c) (Baker's yeast).